We begin with the raw amino-acid sequence, 1205 residues long: ATP-dependent DNA helicase MER3 homolog (1205 aa).

One can recognise a Helicase ATP-binding domain in the interval 41 to 236 (PACFLSDVNM…WLAVPSEGIK (196 aa)). 54–61 (APTGSGKT) provides a ligand contact to ATP. Positions 172–175 (DEVH) match the DEAH box motif. Residues 266-467 (RLQSFIFDIL…CAVEHLNAEI (202 aa)) form the Helicase C-terminal domain. The SEC63 domain maps to 541–852 (PLEPGRLMTK…FEEYVGLDIH (312 aa)). Positions 1075-1091 (QKSEILNRTQGKNSTQL) are enriched in polar residues. The disordered stretch occupies residues 1075–1131 (QKSEILNRTQGKNSTQLAGKKAFEKSKTPDENSLHFVGKRDSSSEKSKALSKTPDEN). Basic and acidic residues predominate over residues 1095–1122 (KAFEKSKTPDENSLHFVGKRDSSSEKSK).

It belongs to the helicase family. SKI2 subfamily. In terms of tissue distribution, transcribed preferentially in early stages of meiocyte development and during meiosis in young flowers.

The protein resides in the nucleus. It is found in the chromosome. It catalyses the reaction Couples ATP hydrolysis with the unwinding of duplex DNA by translocating in the 3'-5' direction.. It carries out the reaction ATP + H2O = ADP + phosphate + H(+). In terms of biological role, DNA helicase required for crossover formation, complete synapsis of homologous chromosomes and bivalent formation during meiosis. Is specific to recombination events resulting in interference-sensitive crossovers (class I meiotic crossover). Works cooperatively with ZIP4 to promote crossovers. The polypeptide is ATP-dependent DNA helicase MER3 homolog (Oryza sativa subsp. japonica (Rice)).